A 319-amino-acid chain; its full sequence is Glutamyl-Q tRNA(Asp) synthetase (319 aa).

Residues arginine 23–serine 27 and glutamate 59 each bind L-glutamate. The 'HIGH' region motif lies at proline 26–serine 36. 4 residues coordinate Zn(2+): cysteine 115, cysteine 117, tyrosine 139, and cysteine 143. Positions 197 and 215 each coordinate L-glutamate. Residues lysine 254–glutamine 258 carry the 'KMSKS' region motif. Lysine 257 provides a ligand contact to ATP.

This sequence belongs to the class-I aminoacyl-tRNA synthetase family. GluQ subfamily. The cofactor is Zn(2+).

In terms of biological role, catalyzes the tRNA-independent activation of glutamate in presence of ATP and the subsequent transfer of glutamate onto a tRNA(Asp). Glutamate is transferred on the 2-amino-5-(4,5-dihydroxy-2-cyclopenten-1-yl) moiety of the queuosine in the wobble position of the QUC anticodon. The chain is Glutamyl-Q tRNA(Asp) synthetase from Bordetella bronchiseptica (strain ATCC BAA-588 / NCTC 13252 / RB50) (Alcaligenes bronchisepticus).